The sequence spans 513 residues: Maturase K (513 aa).

It belongs to the intron maturase 2 family. MatK subfamily.

The protein localises to the plastid. The protein resides in the chloroplast. Its function is as follows. Usually encoded in the trnK tRNA gene intron. Probably assists in splicing its own and other chloroplast group II introns. This is Maturase K from Panicum capillare (Witchgrass).